A 116-amino-acid polypeptide reads, in one-letter code: NADPH-dependent 7-cyano-7-deazaguanine reductase (116 aa).

Catalysis depends on cysteine 31, which acts as the Thioimide intermediate. Aspartate 38 functions as the Proton donor in the catalytic mechanism. Substrate contacts are provided by residues 53 to 55 (IEL) and 72 to 73 (YE).

The protein belongs to the GTP cyclohydrolase I family. QueF type 1 subfamily.

Its subcellular location is the cytoplasm. It carries out the reaction 7-aminomethyl-7-carbaguanine + 2 NADP(+) = 7-cyano-7-deazaguanine + 2 NADPH + 3 H(+). It participates in tRNA modification; tRNA-queuosine biosynthesis. In terms of biological role, catalyzes the NADPH-dependent reduction of 7-cyano-7-deazaguanine (preQ0) to 7-aminomethyl-7-deazaguanine (preQ1). In Chlorobium luteolum (strain DSM 273 / BCRC 81028 / 2530) (Pelodictyon luteolum), this protein is NADPH-dependent 7-cyano-7-deazaguanine reductase.